Here is a 279-residue protein sequence, read N- to C-terminus: Urease accessory protein UreD (279 aa).

The protein belongs to the UreD family. UreD, UreF and UreG form a complex that acts as a GTP-hydrolysis-dependent molecular chaperone, activating the urease apoprotein by helping to assemble the nickel containing metallocenter of UreC. The UreE protein probably delivers the nickel.

The protein resides in the cytoplasm. In terms of biological role, required for maturation of urease via the functional incorporation of the urease nickel metallocenter. The protein is Urease accessory protein UreD of Pseudomonas fluorescens (strain Pf0-1).